A 1172-amino-acid chain; its full sequence is Short transient receptor potential channel 2 (1172 aa).

Over residues 1-10 the composition is skewed to basic and acidic residues; that stretch reads MLMSRTDSKS. 4 disordered regions span residues 1–22, 69–98, 140–227, and 249–271; these read MLMSRTDSKSGKNRSGVRMFKD, VVDPSAPGSSGLNQNSTDVLESDPRPWLTN, SAAR…GGVQ, and ATCGESPPPQPASPASLSSSESV. Residues 1-659 are Cytoplasmic-facing; the sequence is MLMSRTDSKS…PKSQLGRLLK (659 aa). Residues 75-87 show a composition bias toward polar residues; the sequence is PGSSGLNQNSTDV. Over residues 166-177 the composition is skewed to basic and acidic residues; that stretch reads ESAEPRAEEPNR. Residues 195–204 are compositionally biased toward polar residues; the sequence is SLSNSSSQPN. The span at 206-218 shows a compositional bias: basic residues; sequence RTGRTRQRQHRPQ. Residues 261-270 are compositionally biased toward low complexity; sequence SPASLSSSES. ANK repeat units follow at residues 301–330, 377–406, and 430–459; these read KFPPTLLRAIQEGQLGLVQQLLESSSDASG, QIHEALLVAVDTNQPAVVRRLLARLEREKG, and PGVTPLTLACQKDLYEIAQLLMDQGHTIAR. Residues 660–680 form a helical membrane-spanning segment; sequence IPVLKFLLHSASYLWFLIFLL. Over 681–702 the chain is Extracellular; sequence GESLVMETQLSTFKGRSQSVWE. A helical membrane pass occupies residues 703–723; it reads TSLHMIWVTGFLWFECKEVWI. Residues 724-738 are Cytoplasmic-facing; it reads EGLRSYLLDWWNFLD. Residues 739–759 form a helical membrane-spanning segment; the sequence is VVILSLYLASFALRLLLAGLA. The Extracellular segment spans residues 760–789; it reads YMHCRDASDSTTCRYFTTAERSEWRTEDPQ. Residues 790–810 form a helical membrane-spanning segment; it reads FLAEVLFAVTSMLSFTRLAYI. Topologically, residues 811–833 are cytoplasmic; the sequence is LPAHESLGTLQISIGKMIDDMIR. Residues 834-854 traverse the membrane as a helical segment; it reads FMFILMIILTAFLCGLNNIYV. At 855-899 the chain is on the extracellular side; that stretch reads PYQESEKLGNFNETFQFLFWTMFGMEEHTVVDMPQFLVPEFVGRA. A helical membrane pass occupies residues 900 to 920; sequence MYGIFTIVMVIVLLNMLIAMI. Residues 921 to 1172 lie on the Cytoplasmic side of the membrane; the sequence is TNSFQKIEDD…EGDLETKGES (252 aa). The segment at 1118–1172 is disordered; that stretch reads VSLGDGLDGTGEAGAPAPGEPGSSSSAHVLVHREQEAEGSGDLLLEGDLETKGES. The span at 1130–1144 shows a compositional bias: low complexity; it reads AGAPAPGEPGSSSSA.

It belongs to the transient receptor (TC 1.A.4) family. STrpC subfamily. TRPC2 sub-subfamily. As to expression, isoform 3 is ubiquitously expressed at low levels. Isoform 4 is expressed exclusively in vomeronasal organ.

The protein resides in the membrane. Its function is as follows. Thought to form a receptor-activated non-selective calcium permeant cation channel. Probably is operated by a phosphatidylinositol second messenger system activated by receptor tyrosine kinases or G-protein coupled receptors. May also be activated by intracellular calcium store depletion. Plays a role in mediating responsivity to pheromones that elicit aggressive and mating behaviors. Required for response to the Esp1 pheromone which enhances female sexual receptive behavior and to the Esp22 pheromone which inhibits adult male mating behavior. The sequence is that of Short transient receptor potential channel 2 (Trpc2) from Mus musculus (Mouse).